Here is a 219-residue protein sequence, read N- to C-terminus: MYDNALHIRHLGKQDYESVWHAMQHYTDNRDENSQDEIWIVEHTPVFTQGQAGKSEHILNPGDIPVIQVDRGGQVTYHGPGQLVVYPLLDIKRLKIGVRQLVTHIEQSIINMLKRYQIEAYAKADAPGVYVEERKIASLGLRIRKGCSFHGLALNVDMDMSPFQRINPCGYAGMEMIQCKQLGGPQTVEEAGRQLIETLSQELGLDKLVHHQGLPESYE.

Positions 32 to 207 (ENSQDEIWIV…TLSQELGLDK (176 aa)) constitute a BPL/LPL catalytic domain. Residues 71-78 (RGGQVTYH), 138-140 (SLG), and 151-153 (GLA) contribute to the substrate site. The active-site Acyl-thioester intermediate is the cysteine 169.

This sequence belongs to the LipB family.

The protein resides in the cytoplasm. It catalyses the reaction octanoyl-[ACP] + L-lysyl-[protein] = N(6)-octanoyl-L-lysyl-[protein] + holo-[ACP] + H(+). It participates in protein modification; protein lipoylation via endogenous pathway; protein N(6)-(lipoyl)lysine from octanoyl-[acyl-carrier-protein]: step 1/2. In terms of biological role, catalyzes the transfer of endogenously produced octanoic acid from octanoyl-acyl-carrier-protein onto the lipoyl domains of lipoate-dependent enzymes. Lipoyl-ACP can also act as a substrate although octanoyl-ACP is likely to be the physiological substrate. The chain is Octanoyltransferase from Shewanella halifaxensis (strain HAW-EB4).